Reading from the N-terminus, the 93-residue chain is Protein LSO1 (93 aa).

Residues 1–73 (MHNTGKRYSE…TEKLRAKKER (73 aa)) form a disordered region. Residues 20–83 (ARKRRQAYEK…DQLLAAEEEA (64 aa)) adopt a coiled-coil conformation. Composition is skewed to basic and acidic residues over residues 25–49 (QAYE…EEGA) and 57–73 (LIME…KKER).

Its subcellular location is the nucleus. The protein localises to the cytoplasm. In terms of biological role, likely to play a role in iron homeostasis. The polypeptide is Protein LSO1 (Saccharomyces cerevisiae (strain ATCC 204508 / S288c) (Baker's yeast)).